A 603-amino-acid polypeptide reads, in one-letter code: Probable NOT transcription complex subunit VIP2 (603 aa).

Polar residues-rich tracts occupy residues 1–28 (MQGT…NNLS) and 36–70 (NLPS…PGYS). 4 disordered regions span residues 1–70 (MQGT…PGYS), 212–242 (NDGS…LGSL), 306–335 (AGFN…GGVS), and 355–377 (SSHS…PLNS). Residues 312–335 (GTYSSNRPQQQLQHAPSVSSGGVS) are compositionally biased toward polar residues.

The protein belongs to the CNOT2/3/5 family. As to quaternary structure, binds to VIP1. Interacts with Agrobacterium tumefaciens VirE2. Forms a complex made of Agrobacterium VirE2, VIP1, VIP2 and single-stranded DNA (ssDNA).

It localises to the nucleus. Its function is as follows. Transcriptional regulator required for Agrobacterium-mediated stable genetic transformation by T-DNA integration in host genome, but not for T-DNA transient expression. This Nicotiana benthamiana protein is Probable NOT transcription complex subunit VIP2 (VIP2).